Reading from the N-terminus, the 542-residue chain is MLTLRSSSDTVRGFPATKRDMIRQPSAEDLDAAHQLVSSARGVADLRPDSFDASRSPDGDKASVDTGAAMDDTASSDQNHSESQQQQQQQQQQHSQASEQVSAPESSSRSRASPKASRNTEVFLGHQCVPTNRIRDSGANANSGYANSSTSDPRASPAASDASAQNASGCGSTPAGTCPGGGSCNGTGGAVGCDGCPAYNNRVYKAAPRAPSARQARASPSAQTSEEQAQSGLDALDSASQDASGMPKACQNCGTTLTPLWRRDDQGNTICNACGLYYRLHGSHRPVAMKKTVIKRRKRVVPALRDRSPGAGSSDNSSVSPELHSASLATSNADTNAYPPSENGGPSYGAAQFPHSAPPPIDFTGYYSKPTQSTSSPGLNTLINHSPNTKKRTHSESTSAESAPPATRIQSDISASAHLPPINPASARALPNSGRLSSISSLLNHTDPSFTESHVDAALGSNAPARSQTQTQPQPGTRSYSPNPVNPPTTQPAHGSHSIPPPPLTPAADDKVKAARRAQLQREAENMREALRAKERELASLK.

Over residues 1 to 10 (MLTLRSSSDT) the composition is skewed to polar residues. The disordered stretch occupies residues 1-172 (MLTLRSSSDT…SAQNASGCGS (172 aa)). A compositionally biased stretch (basic and acidic residues) spans 44 to 63 (ADLRPDSFDASRSPDGDKAS). Composition is skewed to low complexity over residues 75–117 (SSDQ…PKAS) and 148–168 (SSTS…QNAS). The tract at residues 178 to 196 (CPGGGSCNGTGGAVGCDGC) is cystein-rich region (CRR). Residues 210–223 (APSARQARASPSAQ) are compositionally biased toward low complexity. The disordered stretch occupies residues 210 to 248 (APSARQARASPSAQTSEEQAQSGLDALDSASQDASGMPK). The GATA-type zinc finger occupies 250–274 (CQNCGTTLTPLWRRDDQGNTICNAC). A compositionally biased stretch (basic residues) spans 289–300 (MKKTVIKRRKRV). Disordered stretches follow at residues 289-408 (MKKT…PATR) and 461-525 (SNAP…REAE). Composition is skewed to polar residues over residues 311–320 (AGSSDNSSVS) and 369–387 (KPTQ…NHSP). The span at 396 to 407 (ESTSAESAPPAT) shows a compositional bias: low complexity. Over residues 464–483 (PARSQTQTQPQPGTRSYSPN) the composition is skewed to polar residues. The stretch at 510–542 (DKVKAARRAQLQREAENMREALRAKERELASLK) forms a coiled coil.

Its subcellular location is the nucleus. Its function is as follows. GATA-type transcription repressor that regulates iron acquisition genes through specific binding the GATA sequence elements of target promoters. SreA targets include genes encoding a number of key iron-regulated factors such as the siderophore biosynthesis genes. Is dispensable for growth on keratin substrates. SreA represses the expression of hapX and the siderophore system during iron sufficient conditions by an iron-sensing mechanism, while hapX represses sreA and activates the siderophore system during iron-limiting conditions resulting in efficient iron uptake and inhibition of iron-consuming pathways. The chain is GATA-type transcription factor sreA from Arthroderma benhamiae (strain ATCC MYA-4681 / CBS 112371) (Trichophyton mentagrophytes).